The sequence spans 343 residues: Probable 3',5'-cyclic-nucleotide phosphodiesterase (343 aa).

An N-terminal signal peptide occupies residues methionine 1–alanine 36.

This sequence belongs to the cyclic nucleotide phosphodiesterase class-II family.

The protein resides in the periplasm. It catalyses the reaction a nucleoside 3',5'-cyclic phosphate + H2O = a nucleoside 5'-phosphate + H(+). This Yersinia pestis protein is Probable 3',5'-cyclic-nucleotide phosphodiesterase (cpdP).